The following is a 34-amino-acid chain: GKEKDVFMDKLRDAGAAGIDYLKHFTHHIVKKKN.

In terms of tissue distribution, expressed by the venom gland.

It localises to the secreted. Its function is as follows. May have antimicrobial properties, like most ant linear peptides. The sequence is that of U1-poneritoxin-Na2a from Neoponera apicalis (Ant).